A 472-amino-acid polypeptide reads, in one-letter code: Cysteine--tRNA ligase (472 aa).

Cysteine 29 lines the Zn(2+) pocket. Positions 31–41 match the 'HIGH' region motif; the sequence is PTVYDFAHIGN. Cysteine 227, histidine 252, and glutamate 256 together coordinate Zn(2+). The short motif at 285 to 289 is the 'KMSKS' region element; sequence KMSKS. Lysine 288 lines the ATP pocket.

This sequence belongs to the class-I aminoacyl-tRNA synthetase family. As to quaternary structure, monomer. Requires Zn(2+) as cofactor.

Its subcellular location is the cytoplasm. It catalyses the reaction tRNA(Cys) + L-cysteine + ATP = L-cysteinyl-tRNA(Cys) + AMP + diphosphate. This Bradyrhizobium sp. (strain BTAi1 / ATCC BAA-1182) protein is Cysteine--tRNA ligase.